The sequence spans 46 residues: uncharacterized protein (46 aa).

This is an uncharacterized protein from Escherichia coli (Bacteriophage T4).